Consider the following 497-residue polypeptide: Acetyl-coenzyme A carboxylase carboxyl transferase subunit beta, chloroplastic (497 aa).

The region spanning 230–497 (LWVQCENCYG…FFPVNSNSIK (268 aa)) is the CoA carboxyltransferase N-terminal domain. Zn(2+) contacts are provided by Cys-234, Cys-237, Cys-253, and Cys-256. A C4-type zinc finger spans residues 234 to 256 (CENCYGLNYKKFFRSKFNICEQC).

This sequence belongs to the AccD/PCCB family. Acetyl-CoA carboxylase is a heterohexamer composed of biotin carboxyl carrier protein, biotin carboxylase and 2 subunits each of ACCase subunit alpha and ACCase plastid-coded subunit beta (accD). Zn(2+) is required as a cofactor.

It localises to the plastid. The protein resides in the chloroplast stroma. It catalyses the reaction N(6)-carboxybiotinyl-L-lysyl-[protein] + acetyl-CoA = N(6)-biotinyl-L-lysyl-[protein] + malonyl-CoA. Its pathway is lipid metabolism; malonyl-CoA biosynthesis; malonyl-CoA from acetyl-CoA: step 1/1. Component of the acetyl coenzyme A carboxylase (ACC) complex. Biotin carboxylase (BC) catalyzes the carboxylation of biotin on its carrier protein (BCCP) and then the CO(2) group is transferred by the transcarboxylase to acetyl-CoA to form malonyl-CoA. The polypeptide is Acetyl-coenzyme A carboxylase carboxyl transferase subunit beta, chloroplastic (Nandina domestica (Heavenly bamboo)).